The following is a 29-amino-acid chain: Probable small toxic protein BsrH (29 aa).

The helical transmembrane segment at 6–26 (FQALMLMLAFGSFIIALLTYI) threads the bilayer.

The protein localises to the cell membrane. Its function is as follows. Possible toxic component of a type I toxin-antitoxin (TA) system; an overlapping antisense RNA has been identified. The sequence is that of Probable small toxic protein BsrH from Bacillus subtilis (strain 168).